The primary structure comprises 73 residues: Salivary protein FS48 (73 aa).

An N-terminal signal peptide occupies residues 1-21 (MKFAFAIFVVLAILHTELISA).

It is found in the secreted. Its function is as follows. Salivary protein that inhibits host voltage-gated potassium channels Kv1.1/KCNA1, Kv1.2/KCNA2 and Kv1.3/KCNA3 likely via a voltage-independent pore-blocking mechanism. Suppresses expression of the Kv1.3/KCNA3 channel in lipopolysaccharide (LPS)-stimulated mouse macrophages and human T-cells. Down-regulates secretion of nitric oxide (NO) and inflammatory cytokines, such as TNF-alpha/TNF, IL-1beta/IL1B and IL6, in LPS-stimulated mouse macrophages in a manner dependent on Kv1.3/KCNA3 channel blockage. Reduces activation of MAPK and NF-kappa-B signaling pathways in LPS-stimulated mouse macrophages. Modulates intracellular Ca(2+) signaling in human PMA/ionomycin-triggered T-cells. Interferes with the activation of the MAPK, NF-kappa-B and NFATc1 pathways in human PMA/ionomycin-triggered T-cells. Reduces proliferation of human PMA/ionomycin-triggered T-cells. Down-regulates secretion of cytokines, such as TNF-alpha/TNF and IL2, in human PMA/ionomycin-triggered T-cells. This Xenopsylla cheopis (Oriental rat flea) protein is Salivary protein FS48.